Reading from the N-terminus, the 144-residue chain is Large ribosomal subunit protein uL15 (144 aa).

The disordered stretch occupies residues 1–53; it reads MRLNTLSPADGSKHAPKRLGRGIGSGLGKTGGRGHKGQNSRSGGGVRRGFEGG. Gly residues predominate over residues 21–31; that stretch reads RGIGSGLGKTG.

The protein belongs to the universal ribosomal protein uL15 family. As to quaternary structure, part of the 50S ribosomal subunit.

Binds to the 23S rRNA. This Erwinia tasmaniensis (strain DSM 17950 / CFBP 7177 / CIP 109463 / NCPPB 4357 / Et1/99) protein is Large ribosomal subunit protein uL15.